A 363-amino-acid chain; its full sequence is Jasmonate-induced oxygenase 3 (363 aa).

A Fe2OG dioxygenase domain is found at 210-312 (ESGGCLRVNY…RLSLAFFYNP (103 aa)). Position 216 (Arg-216) interacts with jasmonate. Residues Asn-218 and Tyr-220 each contribute to the 2-oxoglutarate site. Residues His-235, Asp-237, and His-293 each contribute to the Fe cation site. Positions 303 and 305 each coordinate 2-oxoglutarate. 2 residues coordinate jasmonate: Arg-342 and Arg-346.

The protein belongs to the iron/ascorbate-dependent oxidoreductase family. L-ascorbate serves as cofactor. Requires Fe(2+) as cofactor.

The catalysed reaction is jasmonate + 2-oxoglutarate + O2 = (1R,2R)-12-hydroxyjasmonate + succinate + CO2. In terms of biological role, 2-oxoglutarate-dependent dioxygenase involved in the oxidation of jasmonate (JA), a stress-induced phytohormone synthesized in response to attack by pathogens and herbivores, which triggers the activation of defense responses via the JA-mediated signaling pathway. Converts JA to 12-hydroxyjasmonate (12OH-JA), an inactive form of JA. Is specific to free JA, and cannot oxidize the bioactive form jasmonoyl-L-isoleucine (JA-Ile) or other JA-amino acid conjugates. Prevents over-accumulation of JA and indirectly its bioactive form JA-Ile under stress response. Acts as a negative regulator of JA-mediated defense signaling, by contributing to 12OH-JA accumulation, which represses JA defense responses upon infection by the fungal pathogen Botrytis cinerea. Acts as a negative regulator of JA-mediated defense responses upon infestation by the herbivorous caterpillar Mamestra brassicae. The protein is Jasmonate-induced oxygenase 3 of Arabidopsis thaliana (Mouse-ear cress).